We begin with the raw amino-acid sequence, 316 residues long: MTIESRQKGVAKTARNPVKIAPQSTDQLLRKPSWIRVRSSNSQEFYEVKRILREQKLHTVCEEASCPNIGECFGKGTATFMILGDLCTRRCPFCDVAHGRPRPPDPEEPLHLAQSIAAMKLKYVVITSVDRDDLRDGGAQHFVDCIREVRAHSPQTKIEILVPDFRGRLDIALEKLFACPPDVMNHNLETVPRLYRQCRPGADYTHSLRLLKEFKARFPGIPTKSGLMLGLGETDEEILDVMRDLRKHDVEMLTIGQYLQPSIGHLPVMRYVTPGAFKEFERAAIEMGFSNAACGPMVRSSYHADQQAHEAGIIQR.

7 residues coordinate [4Fe-4S] cluster: Cys61, Cys66, Cys72, Cys87, Cys91, Cys94, and Ser301. A Radical SAM core domain is found at 73–290 (FGKGTATFMI…ERAAIEMGFS (218 aa)).

It belongs to the radical SAM superfamily. Lipoyl synthase family. [4Fe-4S] cluster is required as a cofactor.

It localises to the cytoplasm. It catalyses the reaction [[Fe-S] cluster scaffold protein carrying a second [4Fe-4S](2+) cluster] + N(6)-octanoyl-L-lysyl-[protein] + 2 oxidized [2Fe-2S]-[ferredoxin] + 2 S-adenosyl-L-methionine + 4 H(+) = [[Fe-S] cluster scaffold protein] + N(6)-[(R)-dihydrolipoyl]-L-lysyl-[protein] + 4 Fe(3+) + 2 hydrogen sulfide + 2 5'-deoxyadenosine + 2 L-methionine + 2 reduced [2Fe-2S]-[ferredoxin]. It functions in the pathway protein modification; protein lipoylation via endogenous pathway; protein N(6)-(lipoyl)lysine from octanoyl-[acyl-carrier-protein]: step 2/2. Catalyzes the radical-mediated insertion of two sulfur atoms into the C-6 and C-8 positions of the octanoyl moiety bound to the lipoyl domains of lipoate-dependent enzymes, thereby converting the octanoylated domains into lipoylated derivatives. In Nitrosospira multiformis (strain ATCC 25196 / NCIMB 11849 / C 71), this protein is Lipoyl synthase.